The primary structure comprises 179 residues: Bifunctional protein PyrR (179 aa).

The PRPP-binding signature appears at 99-111 (VILIDDVLYTGRT).

The protein belongs to the purine/pyrimidine phosphoribosyltransferase family. PyrR subfamily. As to quaternary structure, homodimer and homohexamer; in equilibrium.

It carries out the reaction UMP + diphosphate = 5-phospho-alpha-D-ribose 1-diphosphate + uracil. Functionally, regulates transcriptional attenuation of the pyrimidine nucleotide (pyr) operon by binding in a uridine-dependent manner to specific sites on pyr mRNA. This disrupts an antiterminator hairpin in the RNA and favors formation of a downstream transcription terminator, leading to a reduced expression of downstream genes. In terms of biological role, also displays a weak uracil phosphoribosyltransferase activity which is not physiologically significant. This Latilactobacillus sakei subsp. sakei (strain 23K) (Lactobacillus sakei subsp. sakei) protein is Bifunctional protein PyrR.